Consider the following 187-residue polypeptide: Phosphatidylethanolamine-binding protein 1 (187 aa).

Ala2 is subject to N-acetylalanine; in peptide hippocampal cholinergic neurostimulating. A Phosphoserine modification is found at Ser6. At Thr42 the chain carries Phosphothreonine. Phosphoserine occurs at positions 51, 52, 54, 98, and 132. Residues 93–134 (KGNDISSGTVLSDYVGSGPPSGTGLHRYVWLVYEQEQPLSCD) form an interaction with RAF1 region.

The protein belongs to the phosphatidylethanolamine-binding protein family. Has a tendency to form dimers by disulfide cross-linking. Interacts with RAF1 and this interaction is enhanced if RAF1 is phosphorylated on residues 'Ser-338', 'Ser-339', 'Tyr-340' and 'Tyr-341'. Interacts with ALOX15; in response to IL13/interleukin-13, prevents the interaction of PEBP1 with RAF1 to activate the ERK signaling cascade. As to expression, HCNP is expressed in brain. Increased expression in aged senescence-accelerated mice.

Its subcellular location is the cytoplasm. Functionally, binds ATP, opioids and phosphatidylethanolamine. Has lower affinity for phosphatidylinositol and phosphatidylcholine. Serine protease inhibitor which inhibits thrombin, neuropsin and chymotrypsin but not trypsin, tissue type plasminogen activator and elastase. Inhibits the kinase activity of RAF1 by inhibiting its activation and by dissociating the RAF1/MEK complex and acting as a competitive inhibitor of MEK phosphorylation. Its function is as follows. HCNP may be involved in the function of the presynaptic cholinergic neurons of the central nervous system. HCNP increases the production of choline acetyltransferase but not acetylcholinesterase. Seems to be mediated by a specific receptor. The protein is Phosphatidylethanolamine-binding protein 1 (Pebp1) of Mus musculus (Mouse).